Reading from the N-terminus, the 64-residue chain is Alpha-like toxin Lqh6 (64 aa).

The LCN-type CS-alpha/beta domain occupies 2–63; the sequence is RDGYIAQPEN…GIIVDGVKCH (62 aa). Cystine bridges form between Cys-12/Cys-62, Cys-16/Cys-34, Cys-20/Cys-44, and Cys-24/Cys-46. The residue at position 64 (Lys-64) is a Lysine amide.

It belongs to the long (4 C-C) scorpion toxin superfamily. Sodium channel inhibitor family. Alpha subfamily. As to expression, expressed by the venom gland.

The protein resides in the secreted. Its function is as follows. Alpha toxins bind voltage-independently at site-3 of sodium channels (Nav) and inhibit the inactivation of the activated channels, thereby blocking neuronal transmission. This toxin is highly toxic to insects and mice, and inhibits the binding of alpha-toxin to cockroach neuronal membranes. The protein is Alpha-like toxin Lqh6 of Leiurus hebraeus (Hebrew deathstalker scorpion).